Consider the following 122-residue polypeptide: Flagellar protein FliT (122 aa).

The segment at 1–50 is required for homodimerization; that stretch reads MTSTVEFINRWQRIALLSQSLLELAQRGEWDLLLQQEVSYLQRIETVMEK. The interval 60-98 is fliD binding; sequence IQDMVAGYIKQTLDNEQLLKGLLQQRLDELSSLIGQSTR.

This sequence belongs to the FliT family. In terms of assembly, homodimer. Interacts with FliD and FlhC.

It localises to the cytoplasm. Its subcellular location is the cytosol. Dual-function protein that regulates the transcription of class 2 flagellar operons and that also acts as an export chaperone for the filament-capping protein FliD. As a transcriptional regulator, acts as an anti-FlhDC factor; it directly binds FlhC, thus inhibiting the binding of the FlhC/FlhD complex to class 2 promoters, resulting in decreased expression of class 2 flagellar operons. As a chaperone, effects FliD transition to the membrane by preventing its premature polymerization, and by directing it to the export apparatus. The polypeptide is Flagellar protein FliT (Salmonella paratyphi A (strain AKU_12601)).